Reading from the N-terminus, the 5088-residue chain is Replicase polyprotein 1ab (5088 aa).

Residues 26–46 (VTNVIQYWTPILTMLLLAIYI) form a helical membrane-spanning segment. Residues 301-323 (EIEDDTEAEETQKTKRKGKLQPQ) form a disordered region. The next 5 helical transmembrane spans lie at 343–363 (HLTF…MSPT), 1132–1152 (GLFL…AITI), 1156–1176 (TMMM…HLLL), 1201–1221 (YGCL…LAYI), and 1250–1270 (ILIP…VSYV). Catalysis depends on for 3C-like proteinase residues His1434 and Cys1539. 2 helical membrane-spanning segments follow: residues 1729–1749 (FTHT…LFFV) and 1758–1778 (ILSS…YGLV). Residues 3093–3112 (KPNCPMVPSEVPVRNKHKSA) are disordered. The ExoN domain maps to 4351 to 4616 (MNIVMDDCIC…MTQCIYQSFV (266 aa)). Catalysis depends on residues Asp4362, Glu4364, and Asp4481. Zn(2+)-binding residues include Cys4498, Cys4504, Cys4522, and His4525. Residues His4599, Asp4604, Lys4880, Asp4969, Lys4998, and Glu5035 contribute to the active site. The Nidovirus-type SAM-dependent 2'-O-MTase domain occupies 4844-5088 (LNNHAALAKA…RQSVFRYSPK (245 aa)).

Homodimer. In terms of processing, specific enzymatic cleavages in vivo by its own protease yield mature proteins. 3CL-PRO is autocatalytically processed.

It localises to the membrane. It carries out the reaction a 5'-end (5'-triphosphoguanosine)-ribonucleoside in mRNA + S-adenosyl-L-methionine = a 5'-end (N(7)-methyl 5'-triphosphoguanosine)-ribonucleoside in mRNA + S-adenosyl-L-homocysteine. The enzyme catalyses RNA(n) + a ribonucleoside 5'-triphosphate = RNA(n+1) + diphosphate. It catalyses the reaction ATP + H2O = ADP + phosphate + H(+). The catalysed reaction is a 5'-end (N(7)-methyl 5'-triphosphoguanosine)-ribonucleoside in mRNA + S-adenosyl-L-methionine = a 5'-end (N(7)-methyl 5'-triphosphoguanosine)-(2'-O-methyl-ribonucleoside) in mRNA + S-adenosyl-L-homocysteine + H(+). Cysteine protease responsible for the majority of cleavages of the polyprotein. Recognizes substrates containing the core sequence [NT]-[EHKQSY]-|-[AGNST]. Its function is as follows. The helicase which contains a zinc finger structure displays RNA and DNA duplex-unwinding activities with 5' to 3' polarity. In terms of biological role, RNA-directed RNA polymerase that catalyzes the transcription of viral genomic and subgenomic RNAs. Functionally, catalyzes the RNA N7-guanylyltransferase reaction to methylate the core cap structure GpppN-RNA into the type-0 cap (m)GpppN-RNA. The sequence is that of Replicase polyprotein 1ab from Ochlerotatus harrisoni (CAVV).